Reading from the N-terminus, the 587-residue chain is 2-succinyl-5-enolpyruvyl-6-hydroxy-3-cyclohexene-1-carboxylate synthase (587 aa).

It belongs to the TPP enzyme family. MenD subfamily. Homodimer. Requires Mg(2+) as cofactor. Mn(2+) serves as cofactor. Thiamine diphosphate is required as a cofactor.

It carries out the reaction isochorismate + 2-oxoglutarate + H(+) = 5-enolpyruvoyl-6-hydroxy-2-succinyl-cyclohex-3-ene-1-carboxylate + CO2. Its pathway is quinol/quinone metabolism; 1,4-dihydroxy-2-naphthoate biosynthesis; 1,4-dihydroxy-2-naphthoate from chorismate: step 2/7. It functions in the pathway cofactor biosynthesis; phylloquinone biosynthesis. In terms of biological role, catalyzes the thiamine diphosphate-dependent decarboxylation of 2-oxoglutarate and the subsequent addition of the resulting succinic semialdehyde-thiamine pyrophosphate anion to isochorismate to yield 2-succinyl-5-enolpyruvyl-6-hydroxy-3-cyclohexene-1-carboxylate (SEPHCHC). The sequence is that of 2-succinyl-5-enolpyruvyl-6-hydroxy-3-cyclohexene-1-carboxylate synthase from Prochlorococcus marinus (strain AS9601).